A 102-amino-acid chain; its full sequence is Small ribosomal subunit protein uS10 (102 aa).

It belongs to the universal ribosomal protein uS10 family. In terms of assembly, part of the 30S ribosomal subunit.

In terms of biological role, involved in the binding of tRNA to the ribosomes. The chain is Small ribosomal subunit protein uS10 from Bifidobacterium longum (strain DJO10A).